Reading from the N-terminus, the 215-residue chain is Pyridoxine/pyridoxamine 5'-phosphate oxidase (215 aa).

Substrate contacts are provided by residues 9-12 and lysine 67; that span reads RKEY. Residues 62–67, 77–78, lysine 84, and glutamine 106 contribute to the FMN site; these read RIVLLK and YT. Substrate contacts are provided by tyrosine 124, arginine 128, and serine 132. Residues 141–142 and tryptophan 187 each bind FMN; that span reads QS. Residue 193-195 coordinates substrate; the sequence is RLH. Position 197 (arginine 197) interacts with FMN.

Belongs to the pyridoxamine 5'-phosphate oxidase family. Homodimer. The cofactor is FMN.

It catalyses the reaction pyridoxamine 5'-phosphate + O2 + H2O = pyridoxal 5'-phosphate + H2O2 + NH4(+). It carries out the reaction pyridoxine 5'-phosphate + O2 = pyridoxal 5'-phosphate + H2O2. Its pathway is cofactor metabolism; pyridoxal 5'-phosphate salvage; pyridoxal 5'-phosphate from pyridoxamine 5'-phosphate: step 1/1. The protein operates within cofactor metabolism; pyridoxal 5'-phosphate salvage; pyridoxal 5'-phosphate from pyridoxine 5'-phosphate: step 1/1. Catalyzes the oxidation of either pyridoxine 5'-phosphate (PNP) or pyridoxamine 5'-phosphate (PMP) into pyridoxal 5'-phosphate (PLP). This chain is Pyridoxine/pyridoxamine 5'-phosphate oxidase, found in Cytophaga hutchinsonii (strain ATCC 33406 / DSM 1761 / CIP 103989 / NBRC 15051 / NCIMB 9469 / D465).